Reading from the N-terminus, the 114-residue chain is MGLTNEKLASLIKKELALIINVSIRNNKIGFINVTEVKLTNDLSFANVYYVILNNQPEFLSLAAEIIEKNKSTIRMLLAKKIRNIRKIPELVFIYDTSLEYGNHIDNILKGINK.

This sequence belongs to the RbfA family. In terms of assembly, monomer. Binds 30S ribosomal subunits, but not 50S ribosomal subunits or 70S ribosomes.

It localises to the cytoplasm. In terms of biological role, one of several proteins that assist in the late maturation steps of the functional core of the 30S ribosomal subunit. Associates with free 30S ribosomal subunits (but not with 30S subunits that are part of 70S ribosomes or polysomes). Required for efficient processing of 16S rRNA. May interact with the 5'-terminal helix region of 16S rRNA. In Phytoplasma mali (strain AT), this protein is Ribosome-binding factor A.